The chain runs to 149 residues: Nucleoside diphosphate kinase 1 (149 aa).

6 residues coordinate ATP: lysine 9, phenylalanine 57, arginine 85, threonine 91, arginine 102, and asparagine 112. Catalysis depends on histidine 115, which acts as the Pros-phosphohistidine intermediate.

It belongs to the NDK family. As to quaternary structure, homohexamer. Can also form dodecamers. The cofactor is Mg(2+).

Its subcellular location is the nucleus. The enzyme catalyses a 2'-deoxyribonucleoside 5'-diphosphate + ATP = a 2'-deoxyribonucleoside 5'-triphosphate + ADP. The catalysed reaction is a ribonucleoside 5'-diphosphate + ATP = a ribonucleoside 5'-triphosphate + ADP. Its function is as follows. Major role in the synthesis of nucleoside triphosphates other than ATP. The ATP gamma phosphate is transferred to the NDP beta phosphate via a ping-pong mechanism, using a phosphorylated active-site intermediate. Involved in transcription regulation. Has G-quadruplex (G4) DNA-binding activity, which is independent of its nucleotide-binding and kinase activity. Binds folded G4 with low nanomolar affinity and corresponding unfolded G-rich DNA more weakly. Stabilizes folded G4s regardless of whether they are prefolded or not. This is Nucleoside diphosphate kinase 1 from Zea mays (Maize).